The chain runs to 387 residues: Anhydro-N-acetylmuramic acid kinase (387 aa).

ATP is bound at residue 17 to 24 (GTSMDGVD).

Belongs to the anhydro-N-acetylmuramic acid kinase family.

It catalyses the reaction 1,6-anhydro-N-acetyl-beta-muramate + ATP + H2O = N-acetyl-D-muramate 6-phosphate + ADP + H(+). The protein operates within amino-sugar metabolism; 1,6-anhydro-N-acetylmuramate degradation. It participates in cell wall biogenesis; peptidoglycan recycling. Catalyzes the specific phosphorylation of 1,6-anhydro-N-acetylmuramic acid (anhMurNAc) with the simultaneous cleavage of the 1,6-anhydro ring, generating MurNAc-6-P. Is required for the utilization of anhMurNAc either imported from the medium or derived from its own cell wall murein, and thus plays a role in cell wall recycling. This Burkholderia mallei (strain ATCC 23344) protein is Anhydro-N-acetylmuramic acid kinase.